Consider the following 355-residue polypeptide: MTALKNDRFLRALLKQPVDVTPVWMMRQAGRYLPEYRATRAKAGDFMSLCMNPELACEVTLQPLDRYPQLDAAILFSDILTIPDAMGQGLYFETGEGPRFRKVVSSLADIEALPVPDPEQDLGYVMDAVRTIRRELNGRVPLIGFSGSPWTLATYMVEGGSSKDFRKSKAMLYDNPQAMHALLDKLAQSVTSYLNGQIHAGAQAVQIFDSWGGSLSAAAYQEFSLTYMRKIVDGLIREHDGRRVPVILFTKGGGLWLESMAEVGAEALGLDWTCDIGSARARVGERVALQGNMDPSVLYANPAAIRAEVARILAAYGKGTGHVFNLGHGITPEVDPAHAGAFFEAVHELSAQYHG.

Substrate is bound by residues 27 to 31 (RQAGR), Asp78, Tyr155, Ser210, and His328.

It belongs to the uroporphyrinogen decarboxylase family. In terms of assembly, homodimer.

The protein resides in the cytoplasm. The enzyme catalyses uroporphyrinogen III + 4 H(+) = coproporphyrinogen III + 4 CO2. It participates in porphyrin-containing compound metabolism; protoporphyrin-IX biosynthesis; coproporphyrinogen-III from 5-aminolevulinate: step 4/4. In terms of biological role, catalyzes the decarboxylation of four acetate groups of uroporphyrinogen-III to yield coproporphyrinogen-III. The sequence is that of Uroporphyrinogen decarboxylase from Pseudomonas aeruginosa (strain LESB58).